Here is a 393-residue protein sequence, read N- to C-terminus: MVNEYKRIVLLTGLMGINDHDFRMVKSLLSKELKLNKMQDEYDRVKIADLMEDKFPKDAGVVQLIKLYKQIPGLGDIANKLKNEKAKAKRKGKGKRKTAAKRQRQEEPSTSQPMSTTNEDAEPESGRSTPDTQVAQLSLPTASRRNQAIQISPTIASSSGQTSSRSSETLQSIIQSPETPTRSSSRILDPPVSLGTAYSSAQALGVLLATPAKRQRLKNVPKEPSEENGYQQGSKKVMVLKVTEPFAYDMKGEKMFHATVATETEFFRVKVFDIVLKEKFIPNKVLTISNYVGCNGFINIYSASSVSEVNDGEPMNIPLSLRKSANRTPKINYLCSKRRGIFVNGVFTVCKKEERGYYICYEIGDDTGMMEVEVYGRLTNIACNPGDKLRLML.

A Pyrin domain is found at 1–87; it reads MVNEYKRIVL…ANKLKNEKAK (87 aa). Residues 82–188 are disordered; the sequence is KNEKAKAKRK…TPTRSSSRIL (107 aa). Residues 87 to 102 are compositionally biased toward basic residues; sequence KAKRKGKGKRKTAAKR. Polar residues-rich tracts occupy residues 108-118 and 126-151; these read PSTSQPMSTTN and GRST…AIQI. The segment covering 152 to 169 has biased composition (low complexity); the sequence is SPTIASSSGQTSSRSSET. The segment covering 170–186 has biased composition (polar residues); that stretch reads LQSIIQSPETPTRSSSR. The region spanning 219–393 is the HIN-200 domain; it reads NVPKEPSEEN…NPGDKLRLML (175 aa).

This sequence belongs to the HIN-200 family.

The protein localises to the nucleus. This chain is Pyrin and HIN domain-containing protein 1-like, found in Mus musculus (Mouse).